Reading from the N-terminus, the 449-residue chain is Exodeoxyribonuclease 7 large subunit (449 aa).

Belongs to the XseA family. Heterooligomer composed of large and small subunits.

The protein localises to the cytoplasm. The enzyme catalyses Exonucleolytic cleavage in either 5'- to 3'- or 3'- to 5'-direction to yield nucleoside 5'-phosphates.. Functionally, bidirectionally degrades single-stranded DNA into large acid-insoluble oligonucleotides, which are then degraded further into small acid-soluble oligonucleotides. The chain is Exodeoxyribonuclease 7 large subunit from Salmonella typhimurium (strain LT2 / SGSC1412 / ATCC 700720).